A 1487-amino-acid polypeptide reads, in one-letter code: MASQRSDFAPDLYDFIESNDFGEDPLIRAASAAEEGFTQPAAPDLLYGSQNMFGVDDAPLSTPAVVIPPPSPTPEPRGGKAKRSPSAAGSGGPPTPAAAAQPASPAPSPAPGLAAMLKMVHSSVAPGNGRRATGSSSPGGGDAADPVALDSDTETCPGSPQPEFPSSASPGGGSPAPRVRSISISSSSSSSSSMDEDDQADGAGASSSSSSSSDDSDSDEGGEEETPRPRHSQNAAKTPSAAGSPGPSSGGDRPAAGAATPKSCRSGAASPGAPAPAPASAPAPSRPGGGLLPPGARILEYLEGVREANLAKTLERPEPPAGMASPPGRSPHRLPKDQRPKSALAGASKRKRANPRPIPQTQTQAPAEEAPQTAVWDLLDMNSSQATGAAAAAASAPAAASCAPGVYQREPLLTPSGDPWPGSDPPPMGRVRYGGTGDSRDGLWDDPEIVLAASRYAEAQAPVPVFVPEMGDSTKQYNALVRMVFESREAMSWLQNSKLSGQDQNLAQFCQKFIHAPRGHGSFITGSVANPLPHIGDAMAAGNALWALPHAAASVAMSRRYDRTQKSFILQSLRRAYADMAYPRDEAGRPDSLAAVAGYPAQAAAAAASQQQPEAPAPSVRVREAYTRVCAALGPRRKAAAAAAAPGTRAPRPSAFRLRELGDACVLACQAVFEALLRLRGGASAVPGLDPSEIPSPACPPEALCSNPAGLETAALSLYELRDLVERARLLGDSDPTHRLGSDELRLAVRAVLVVARTVAPLVRYNAEGARARASAWTVTQAVFSIPSLVGGMLGEAVSLLAPPTRSQQPSSSSPGGEPFSGSAAAEGSLQTLPPLWPTVPGKQSATVPSSHSQSPQHSQSGGGAGATTATCCRATQTNARSRGQQHQPQKARSPQAAASPAHLSQEAMPGSSSDDRAIHGRPRGKSGKRRSEPLEPAAQAGASASFSSSARGYDPSGPVDSPPAPKRRVATPGHQAPRALGPMPAEGPDRRGGFRRVPRGDCHTPRPSDAACAAYCPPELVAELIDNQLFPEAWRPALTFDPQALATIAARCSGPPARDGARFGELAASGPLRRRAAWMHQIPDPEDVKVVVLYSPLQDEDLLGGLPASRPGGSRREPLWSDLKGGLSALLAALGNRILTKRSHAWAGNWTGAPDVSALNAQGVLLLSTGDLAFTGCVEYLCLRLGSARRKLLVLDAVSTEDWPQDGPAISQYHIYMRAALTPRVACAVRWPRERHLSRAVLTSSTLFGPGLFARAEAAFARLYPDSAPLRLCRSSNVAYTVDTRAGERTRVPLAPREYRQRVLPDYDGCKDMRAQAEGLGFHDPDFEEGAAQSHRAANRWGLGAWLRPVYLACGRRGAGAVEPSELLIPELLSEFCRVALLEPDAEAEPLVLPITEAPRRRAPRVDWEPGFGSRSTSVLHMGATELCLPEPDDELEIDGAGDVELVVEHPGPSPGVAQALRRAPIKIEVVSDDEDGGDWCNPYLS.

3 disordered regions span residues 41–295 (AAPD…LPPG), 310–370 (LAKT…AEEA), and 803–1007 (PPTR…HTPR). Residues 66 to 75 (VIPPPSPTPE) show a composition bias toward pro residues. Low complexity-rich tracts occupy residues 165–193 (PSSA…SSSS) and 201–213 (DGAG…SSSS). Over residues 214 to 224 (DDSDSDEGGEE) the composition is skewed to acidic residues. Residues 235-272 (AAKTPSAAGSPGPSSGGDRPAAGAATPKSCRSGAASPG) are compositionally biased toward low complexity. The span at 273 to 285 (APAPAPASAPAPS) shows a compositional bias: pro residues. Low complexity-rich tracts occupy residues 807-829 (SQQP…AEGS), 849-860 (PSSHSQSPQHSQ), and 867-877 (ATTATCCRATQ). The segment covering 878-893 (TNARSRGQQHQPQKAR) has biased composition (polar residues). Residues 920 to 929 (HGRPRGKSGK) are compositionally biased toward basic residues. Positions 938 to 951 (AAQAGASASFSSSA) are enriched in low complexity. Over residues 988–1007 (GPDRRGGFRRVPRGDCHTPR) the composition is skewed to basic and acidic residues.

Belongs to the herpesviridae ICP4 family. A long stretch of serine residues may be a major site of phosphorylation.

The protein resides in the host nucleus. In terms of biological role, this IE protein is a multifunctional protein capable of migrating to the nucleus, binding to DNA, trans-activating other viral genes, and autoregulating its own synthesis. The protein is Major viral transcription factor (IE) of Equine herpesvirus 1 (strain Ab4p) (EHV-1).